A 319-amino-acid polypeptide reads, in one-letter code: Peroxidase 13 (319 aa).

Positions 1 to 22 are cleaved as a signal peptide; sequence MITIALFLVLLYFHDQLGYSAA. 4 cysteine pairs are disulfide-bonded: Cys33–Cys111, Cys66–Cys71, Cys117–Cys315, and Cys196–Cys222. The active-site Proton acceptor is the His64. Residues Asp65, Val68, Gly70, Asp72, and Ser74 each contribute to the Ca(2+) site. Pro158 lines the substrate pocket. Position 189 (His189) interacts with heme b. Residue Thr190 participates in Ca(2+) binding. 3 residues coordinate Ca(2+): Asp235, Ser238, and Asp243. N-linked (GlcNAc...) asparagine glycosylation occurs at Asn280.

This sequence belongs to the peroxidase family. Classical plant (class III) peroxidase subfamily. It depends on heme b as a cofactor. Ca(2+) serves as cofactor.

The protein localises to the secreted. The catalysed reaction is 2 a phenolic donor + H2O2 = 2 a phenolic radical donor + 2 H2O. Functionally, removal of H(2)O(2), oxidation of toxic reductants, biosynthesis and degradation of lignin, suberization, auxin catabolism, response to environmental stresses such as wounding, pathogen attack and oxidative stress. These functions might be dependent on each isozyme/isoform in each plant tissue. This is Peroxidase 13 (PER13) from Arabidopsis thaliana (Mouse-ear cress).